A 741-amino-acid chain; its full sequence is Zinc metalloproteinase nas-30 (741 aa).

Low complexity-rich tracts occupy residues 71-85 (KPAP…APAP) and 97-118 (PAPK…DAPP). The tract at residues 71 to 122 (KPAPAAAGPRSAPAPTNEDYNTDIDVPAPKAKARAAPTPRRAQADAPPVYRQ) is disordered. The region spanning 324 to 516 (KVITGSVYRW…VKQVNRLYCN (193 aa)) is the Peptidase M12A domain. Cystine bridges form between Cys-364-Cys-515, Cys-385-Cys-404, Cys-519-Cys-539, Cys-541-Cys-550, Cys-562-Cys-583, and Cys-610-Cys-630. Residue His-412 participates in Zn(2+) binding. Glu-413 is an active-site residue. Positions 416 and 422 each coordinate Zn(2+). Positions 539–550 (CKCPDGLGGKLC) constitute an EGF-like domain. The region spanning 550–648 (CGRAAKGTDH…ISDQSEALIL (99 aa)) is the CUB domain. An N-linked (GlcNAc...) asparagine glycan is attached at Asn-633.

It depends on Zn(2+) as a cofactor.

Metalloprotease. The polypeptide is Zinc metalloproteinase nas-30 (Caenorhabditis elegans).